The following is a 580-amino-acid chain: Nuclear body protein SP140-like protein (580 aa).

In terms of domain architecture, HSR spans 33-149 (SLQRLFTEDQ…IYKSFKNAIQ (117 aa)). The segment at 155 to 293 (QESDRKEREE…RSRASRKHKD (139 aa)) is disordered. Residues 156 to 170 (ESDRKEREERPDIKL) show a composition bias toward basic and acidic residues. Lys-169 participates in a covalent cross-link: Glycyl lysine isopeptide (Lys-Gly) (interchain with G-Cter in SUMO2). Ser-180 is subject to Phosphoserine. The segment covering 207–219 (KPKRKRRKKKGHG) has biased composition (basic residues). The segment covering 224 to 236 (GTRTQKNNQQNDN) has biased composition (polar residues). A compositionally biased stretch (basic residues) spans 280–290 (QKRVRSRASRK). Lys-292 is covalently cross-linked (Glycyl lysine isopeptide (Lys-Gly) (interchain with G-Cter in SUMO2)). One can recognise an SAND domain in the interval 293–374 (DETVDFQAPL…RRLMEEGSLP (82 aa)). A PHD-type zinc finger spans residues 403 to 449 (LDECEVCRDGGELFCCDTCSRVFHEDCHIPPVESEKTPWNCIFCRMK). Residues 467–570 (QMCPEEQLKC…AEFEKDFKEV (104 aa)) form the Bromo domain.

The sequence is that of Nuclear body protein SP140-like protein (SP140L) from Homo sapiens (Human).